A 572-amino-acid chain; its full sequence is Proline--tRNA ligase (572 aa).

This sequence belongs to the class-II aminoacyl-tRNA synthetase family. ProS type 1 subfamily. As to quaternary structure, homodimer.

It localises to the cytoplasm. It carries out the reaction tRNA(Pro) + L-proline + ATP = L-prolyl-tRNA(Pro) + AMP + diphosphate. Functionally, catalyzes the attachment of proline to tRNA(Pro) in a two-step reaction: proline is first activated by ATP to form Pro-AMP and then transferred to the acceptor end of tRNA(Pro). As ProRS can inadvertently accommodate and process non-cognate amino acids such as alanine and cysteine, to avoid such errors it has two additional distinct editing activities against alanine. One activity is designated as 'pretransfer' editing and involves the tRNA(Pro)-independent hydrolysis of activated Ala-AMP. The other activity is designated 'posttransfer' editing and involves deacylation of mischarged Ala-tRNA(Pro). The misacylated Cys-tRNA(Pro) is not edited by ProRS. This chain is Proline--tRNA ligase, found in Escherichia coli O157:H7.